The sequence spans 312 residues: Olfactory receptor 10D3 (312 aa).

Residues 1-26 (MEVKNCCMVTEFILLGIPHTEGLEMT) lie on the Extracellular side of the membrane. A helical membrane pass occupies residues 27-47 (LFVLFLPFYACTLLGNVSILV). The Cytoplasmic segment spans residues 48 to 57 (AVMSSARLHT). A helical membrane pass occupies residues 58–78 (PMYFFLGNLSVFDMGFSSVTC). The Extracellular portion of the chain corresponds to 79 to 97 (PKMLLYLMGLSRLISYKDC). An intrachain disulfide couples C97 to C179. The chain crosses the membrane as a helical span at residues 98–118 (VCQLFFFHFLGSIECFLFTVM). The Cytoplasmic portion of the chain corresponds to 119–139 (AYDRFTAICYPLRYTVIMNPR). A helical membrane pass occupies residues 140–160 (ICVALAVGTWLLGCIHSSILT). The Extracellular portion of the chain corresponds to 161–197 (SLTFTLPYCGPNEVDHFFCDIPALLPLACADTSLAQR). Residues 198–218 (VSFTNVGLISLVCFLLILLSY) traverse the membrane as a helical segment. Residues 219 to 239 (TRITISILSIRTTEGRRRAFS) are Cytoplasmic-facing. A helical transmembrane segment spans residues 240–260 (TCSAHLIAILCAYGPIITVYL). The Extracellular portion of the chain corresponds to 261–266 (QPTPNP). The helical transmembrane segment at 267-287 (MLGTVVQILMNLVGPMLNPLI) threads the bilayer. Topologically, residues 288–312 (YTLRNKEVKTALKTILHRTGHVPES) are cytoplasmic.

This sequence belongs to the G-protein coupled receptor 1 family.

The protein resides in the cell membrane. Odorant receptor. This Homo sapiens (Human) protein is Olfactory receptor 10D3.